We begin with the raw amino-acid sequence, 404 residues long: MHC class I-like protein MILL1 (404 aa).

Residues 1–30 (MMLSRDLRAEAAVRLWIMFLLLEDLLGACA) form the signal peptide. Positions 59-150 (EVAGPHTLRY…VTGQKGQDKG (92 aa)) are alpha-1. 3 N-linked (GlcNAc...) asparagine glycosylation sites follow: asparagine 98, asparagine 102, and asparagine 165. The tract at residues 151–242 (LHILQATLGC…SLRSEPLDTG (92 aa)) is alpha-2. 2 cysteine pairs are disulfide-bonded: cysteine 160–cysteine 223 and cysteine 262–cysteine 322. In terms of domain architecture, Ig-like C1-type spans 224-338 (PAQLQRHLAS…GNIEKRAVIV (115 aa)). The segment at 243-342 (SPMVIVTFRN…KRAVIVNTVS (100 aa)) is alpha-3. N-linked (GlcNAc...) asparagine glycosylation occurs at asparagine 323. Residues 343–373 (GEKTRQPSTSGVGGRVKKSLWTTMTTAFMVT) form a connecting peptide region. Serine 374 carries GPI-anchor amidated serine lipidation. Residues 375-404 (WTRKTGGDSTLLLLWWLLFFSTVLAVLTLV) constitute a propeptide, removed in mature form.

It belongs to the MHC class I family. As to quaternary structure, heterodimer with B2M. As to expression, detected in skin, esophagus, tongue, skin, muscle, uterus, ovary, testis and epididymis.

It localises to the cell membrane. The polypeptide is MHC class I-like protein MILL1 (Rattus norvegicus (Rat)).